A 105-amino-acid chain; its full sequence is UPF0235 protein RrIowa_1526 (105 aa).

The protein belongs to the UPF0235 family.

The protein is UPF0235 protein RrIowa_1526 of Rickettsia rickettsii (strain Iowa).